The chain runs to 477 residues: MKILFVAAEGAPFSKTGGLGDVIGALPKSLVKAGHEVAVILPYYDMVEAKFGNQIEDVLHFEVSVGWRRQYCGIKKTVLNGVTFYFIDNQYYFFRGHVYGDFDDGERFAFFQLAAIEAMERIDFIPDLLHVHDYHTAMIPFLLKEKYRWIQAYEDIETVLTIHNLEFQGQFSEGMLGDLFGVGLERYADGTLRWNNCLNWMKAGILYANRVSTVSPSYAHEIMTSQFGCNLDQILKMESGKVSGIVNGIDADLYNPQTDALLDYHFNQEDLSGKAKNKAKLQERVGLPVRXXXPLVGIVSRLTRQKGFDVVVESLHHILQEDVQIVLLGTGDPAFEGAFSWFAQIYPDKLSTNITFDVKLAQEIYAACDLFLMPSRFEPCGLSQMMAMRYGTLPLVHEVGGLRDTVRAFNPIEGSGTGFSFDNLSPYWLNWTFQTALDLYRNHPDIWRNLQKQAMESDFSWDTACKSYLDLYHSLVN.

An ADP-alpha-D-glucose-binding site is contributed by Lys15.

Belongs to the glycosyltransferase 1 family. Bacterial/plant glycogen synthase subfamily.

It carries out the reaction [(1-&gt;4)-alpha-D-glucosyl](n) + ADP-alpha-D-glucose = [(1-&gt;4)-alpha-D-glucosyl](n+1) + ADP + H(+). It functions in the pathway glycan biosynthesis; glycogen biosynthesis. In terms of biological role, synthesizes alpha-1,4-glucan chains using ADP-glucose. This Streptococcus pneumoniae serotype 19F (strain G54) protein is Glycogen synthase.